Here is a 638-residue protein sequence, read N- to C-terminus: ATP-dependent zinc metalloprotease FtsH (638 aa).

At 1–11 the chain is on the cytoplasmic side; sequence MSQKGKNKKWR. The chain crosses the membrane as a helical span at residues 12–32; that stretch reads SAGLYALLAIVLISLATTFLG. Topologically, residues 33 to 114 are lumenal; it reads NRPPERLEIS…LAVRPVQEEG (82 aa). A helical transmembrane segment spans residues 115–135; it reads LLGRILSTFFLPVLLLLGLFF. Over 136-638 the chain is Cytoplasmic; it reads LLRRAQNGPG…TLPMAVNAGA (503 aa). 209–216 is an ATP binding site; that stretch reads GPPGTGKT. His-431 provides a ligand contact to Zn(2+). Glu-432 is an active-site residue. Residues His-435 and Asp-510 each coordinate Zn(2+).

The protein in the central section; belongs to the AAA ATPase family. This sequence in the C-terminal section; belongs to the peptidase M41 family. As to quaternary structure, homohexamer. Zn(2+) serves as cofactor.

The protein resides in the cellular thylakoid membrane. Acts as a processive, ATP-dependent zinc metallopeptidase for both cytoplasmic and membrane proteins. Plays a role in the quality control of integral membrane proteins. In Synechococcus sp. (strain JA-2-3B'a(2-13)) (Cyanobacteria bacterium Yellowstone B-Prime), this protein is ATP-dependent zinc metalloprotease FtsH.